Reading from the N-terminus, the 802-residue chain is E3 ubiquitin-protein ligase UHRF2 (802 aa).

Positions 1–78 constitute a Ubiquitin-like domain; that stretch reads MWIQVRTIDG…IQLLVRPDPD (78 aa). 2 disordered regions span residues 80 to 116 and 153 to 197; these read LPGTSTQIEAKPCSNSPPKVKKAPRVGPSNQPSTSAR and RASD…STSN. Composition is skewed to polar residues over residues 82–96, 153–177, and 188–197; these read GTSTQIEAKPCSNSP, RASDGQSRGKTPLKNGSSCKRTNGN, and KLDSVPSTSN. Residues 117–311 form a required for interaction with histone H3 region; it reads ARLIDPGFGI…VDEIFKIERP (195 aa). The interaction with PCNP stretch occupies residues 194–288; it reads STSNSDCVAA…KELRVKIFLG (95 aa). The PHD-type zinc-finger motif lies at 344–395; the sequence is SCSCRVCGGKHEPNMQLLCDECNVAYHIYCLNPPLDKVPEEEYWYCPSCKTD. A methyl-CpG binding and interaction with HDAC1 region spans residues 414 to 644; sequence KMPSASTESR…LQYPAGYPSD (231 aa). Residues 448 to 612 form the YDG domain; it reads GPIPGIPVGS…FLVWRYLLRR (165 aa). The segment at 640-674 is disordered; it reads GYPSDKEGKKPKGQSKKQPSGTTKRPISDDDCPSA. S667 carries the post-translational modification Phosphoserine. The segment at 733 to 772 adopts an RING-type zinc-finger fold; that stretch reads CVCCQELVYQPVTTECFHNVCKDCLQRSFKAQVFSCPACR.

Homodimer; disulfide-linked. Binds methylated CpG containing oligonucleotides. Interacts with H3; the interaction has a preference for the 'Lys-9' trimethylated form of H3 (H3K9me3). Interacts with PCNP. Interacts with HDAC1. Interacts directly with CCNE1; the interaction ubiquitinates CCNE1 and appears independent of CCNE1 phosphorylation. Interacts with CCND1; the interaction ubiquitinates CCND1 and appears independent of CCND1 phosphorylation. Interacts with p53/TP53 and RB1. Interacts with UBE2I. Interacts with ZNF618. Interacts with UHRF1. Interacts with FANCD2. Interacts with ATR. Interacts with PCNA. In terms of processing, may be autoubiquitinated; which may lead to proteasomal degradation. Phosphorylated. Phosphorylation may be mediated by CDK2. Post-translationally, autosumoylated.

The protein localises to the nucleus. The protein resides in the chromosome. It catalyses the reaction S-ubiquitinyl-[E2 ubiquitin-conjugating enzyme]-L-cysteine + [acceptor protein]-L-lysine = [E2 ubiquitin-conjugating enzyme]-L-cysteine + N(6)-ubiquitinyl-[acceptor protein]-L-lysine.. It functions in the pathway protein modification; protein ubiquitination. Its activity is regulated as follows. E3 ligase activity is robustly activated by 5-hydroxymethylcytosine. Its function is as follows. E3 ubiquitin ligase that plays important roles in DNA methylation, histone modifications, cell cycle and DNA repair. Acts as a specific reader for 5-hydroxymethylcytosine (5hmC) and thereby recruits various substrates to these sites to ubiquitinate them. This activity also allows the maintenance of 5mC levels at specific genomic loci and regulates neuron-related gene expression. Participates in cell cycle regulation by ubiquitinating cyclins CCND1 and CCNE1 and thereby inducing G1 arrest. Also ubiquitinates PCNP leading to its degradation by the proteasome. Plays an active role in DNA damage repair by ubiquitinating p21/CDKN1A leading to its proteasomal degradation. Also promotes DNA repair by acting as an interstrand cross-links (ICLs) sensor. Mechanistically, cooperates with UHRF1 to ensure recruitment of FANCD2 to ICLs, leading to FANCD2 monoubiquitination and subsequent activation. Contributes to UV-induced DNA damage response by physically interacting with ATR in response to irradiation, thereby promoting ATR activation. The chain is E3 ubiquitin-protein ligase UHRF2 (UHRF2) from Homo sapiens (Human).